Reading from the N-terminus, the 594-residue chain is MLSSTLYAGWLLSLAAPALCVVQEKLSAVPSGWTLIEDASESDTITLSIALARQNLDQLESKLTTLATPGNPEYGKWLDQSDIESLFPTASDDAVLQWLKAAGITQVSRQGSLVNFATTVGTANKLFDTKFSYYRNGASQKLRTTQYSIPDHLTESIDLIAPTVFFGKEQNSALSSHAVKLPALPRRAATNSSCANLITPDCLVEMYNLGDYKPDASSGSRVGFGSFLNESANYADLAAYEQLFNIPPQNFSVELINRGVNDQNWATASLGEANLDVELIVAVSHPLPVVEFITGGSPPFVPNADEPTAADNQNEPYLQYYEYLLSKPNSHLPQVISNSYGDDEQTVPEYYARRVCNLIGLMGLRGITVLESSGDTGIGSACMSNDGTNKPQFTPTFPGTCPFITAVGGTQSYAPEVAWDGSSGGFSNYFSRPWYQSFAVDNYLNNHITKDTKKYYSQYTNFKGRGFPDVSAHSLTPYYEVVLTGKHYKSGGTSAASPVFAGIVGLLNDARLRAGKSTLGFLNPLLYSILAEGFTDITAGSSIGCNGINPQTGKPVPGGGIIPYAHWNATAGWDPVTGLGVPDFMKLKELVLSL.

An N-terminal signal peptide occupies residues 1-20; the sequence is MLSSTLYAGWLLSLAAPALC. Positions 21–187 are cleaved as a propeptide — removed in mature form; the sequence is VVQEKLSAVP…AVKLPALPRR (167 aa). N-linked (GlcNAc...) asparagine glycosylation is found at asparagine 191, asparagine 229, and asparagine 250. The Peptidase S53 domain maps to 197–594; the sequence is LITPDCLVEM…MKLKELVLSL (398 aa). Residues glutamate 272, aspartate 276, and serine 494 each act as charge relay system in the active site. Ca(2+)-binding residues include aspartate 536 and isoleucine 537. The N-linked (GlcNAc...) asparagine glycan is linked to asparagine 568. Ca(2+)-binding residues include glycine 572 and aspartate 574.

The cofactor is Ca(2+). Post-translationally, N-glycosylated.

It localises to the secreted. The protein resides in the extracellular space. It carries out the reaction Release of an N-terminal tripeptide from a polypeptide.. Its function is as follows. Secreted tripeptidyl-peptidase which degrades proteins at acidic pHs and is involved in virulence. This chain is Tripeptidyl-peptidase sed4 (sed4), found in Aspergillus fumigatus (strain ATCC MYA-4609 / CBS 101355 / FGSC A1100 / Af293) (Neosartorya fumigata).